We begin with the raw amino-acid sequence, 364 residues long: UDP-N-acetylglucosamine--N-acetylmuramyl-(pentapeptide) pyrophosphoryl-undecaprenol N-acetylglucosamine transferase (364 aa).

UDP-N-acetyl-alpha-D-glucosamine-binding positions include 19 to 21 (TGG), Asn-131, Arg-167, Ser-195, Ile-250, and Gln-295.

This sequence belongs to the glycosyltransferase 28 family. MurG subfamily.

The protein localises to the cell inner membrane. The catalysed reaction is di-trans,octa-cis-undecaprenyl diphospho-N-acetyl-alpha-D-muramoyl-L-alanyl-D-glutamyl-meso-2,6-diaminopimeloyl-D-alanyl-D-alanine + UDP-N-acetyl-alpha-D-glucosamine = di-trans,octa-cis-undecaprenyl diphospho-[N-acetyl-alpha-D-glucosaminyl-(1-&gt;4)]-N-acetyl-alpha-D-muramoyl-L-alanyl-D-glutamyl-meso-2,6-diaminopimeloyl-D-alanyl-D-alanine + UDP + H(+). The protein operates within cell wall biogenesis; peptidoglycan biosynthesis. Cell wall formation. Catalyzes the transfer of a GlcNAc subunit on undecaprenyl-pyrophosphoryl-MurNAc-pentapeptide (lipid intermediate I) to form undecaprenyl-pyrophosphoryl-MurNAc-(pentapeptide)GlcNAc (lipid intermediate II). The polypeptide is UDP-N-acetylglucosamine--N-acetylmuramyl-(pentapeptide) pyrophosphoryl-undecaprenol N-acetylglucosamine transferase (Xylella fastidiosa (strain Temecula1 / ATCC 700964)).